The sequence spans 349 residues: tRNA pseudouridine synthase D (349 aa).

Position 27 (Phe27) interacts with substrate. The active-site Nucleophile is the Asp80. Asn129 lines the substrate pocket. Residues 155-303 (GVPNYFGAQR…VEAARRAMLL (149 aa)) enclose the TRUD domain. Substrate is bound at residue Phe329.

This sequence belongs to the pseudouridine synthase TruD family.

It catalyses the reaction uridine(13) in tRNA = pseudouridine(13) in tRNA. Responsible for synthesis of pseudouridine from uracil-13 in transfer RNAs. The chain is tRNA pseudouridine synthase D from Klebsiella pneumoniae subsp. pneumoniae (strain ATCC 700721 / MGH 78578).